We begin with the raw amino-acid sequence, 254 residues long: Small ribosomal subunit protein uS2 (254 aa).

It belongs to the universal ribosomal protein uS2 family.

The sequence is that of Small ribosomal subunit protein uS2 from Borrelia hermsii (strain HS1 / DAH).